Here is an 865-residue protein sequence, read N- to C-terminus: Alanine--tRNA ligase (865 aa).

Histidine 556, histidine 560, cysteine 660, and histidine 664 together coordinate Zn(2+).

This sequence belongs to the class-II aminoacyl-tRNA synthetase family. Zn(2+) serves as cofactor.

It is found in the cytoplasm. It carries out the reaction tRNA(Ala) + L-alanine + ATP = L-alanyl-tRNA(Ala) + AMP + diphosphate. In terms of biological role, catalyzes the attachment of alanine to tRNA(Ala) in a two-step reaction: alanine is first activated by ATP to form Ala-AMP and then transferred to the acceptor end of tRNA(Ala). Also edits incorrectly charged Ser-tRNA(Ala) and Gly-tRNA(Ala) via its editing domain. This Vesicomyosocius okutanii subsp. Calyptogena okutanii (strain HA) protein is Alanine--tRNA ligase.